The sequence spans 205 residues: Thiamine-phosphate synthase (205 aa).

4-amino-2-methyl-5-(diphosphooxymethyl)pyrimidine is bound by residues 37–41 (QVREK) and Asn-69. Residues Asp-70 and Asp-89 each coordinate Mg(2+). Ser-108 is a 4-amino-2-methyl-5-(diphosphooxymethyl)pyrimidine binding site. 2-[(2R,5Z)-2-carboxy-4-methylthiazol-5(2H)-ylidene]ethyl phosphate is bound at residue 134-136 (TGS). Position 137 (Lys-137) interacts with 4-amino-2-methyl-5-(diphosphooxymethyl)pyrimidine. 2-[(2R,5Z)-2-carboxy-4-methylthiazol-5(2H)-ylidene]ethyl phosphate-binding positions include Gly-165 and 185–186 (IS).

Belongs to the thiamine-phosphate synthase family. The cofactor is Mg(2+).

The catalysed reaction is 2-[(2R,5Z)-2-carboxy-4-methylthiazol-5(2H)-ylidene]ethyl phosphate + 4-amino-2-methyl-5-(diphosphooxymethyl)pyrimidine + 2 H(+) = thiamine phosphate + CO2 + diphosphate. The enzyme catalyses 2-(2-carboxy-4-methylthiazol-5-yl)ethyl phosphate + 4-amino-2-methyl-5-(diphosphooxymethyl)pyrimidine + 2 H(+) = thiamine phosphate + CO2 + diphosphate. It carries out the reaction 4-methyl-5-(2-phosphooxyethyl)-thiazole + 4-amino-2-methyl-5-(diphosphooxymethyl)pyrimidine + H(+) = thiamine phosphate + diphosphate. It participates in cofactor biosynthesis; thiamine diphosphate biosynthesis; thiamine phosphate from 4-amino-2-methyl-5-diphosphomethylpyrimidine and 4-methyl-5-(2-phosphoethyl)-thiazole: step 1/1. Its function is as follows. Condenses 4-methyl-5-(beta-hydroxyethyl)thiazole monophosphate (THZ-P) and 2-methyl-4-amino-5-hydroxymethyl pyrimidine pyrophosphate (HMP-PP) to form thiamine monophosphate (TMP). This chain is Thiamine-phosphate synthase, found in Clostridium botulinum (strain ATCC 19397 / Type A).